We begin with the raw amino-acid sequence, 365 residues long: Aminomethyltransferase (365 aa).

Belongs to the GcvT family. In terms of assembly, the glycine cleavage system is composed of four proteins: P, T, L and H.

It carries out the reaction N(6)-[(R)-S(8)-aminomethyldihydrolipoyl]-L-lysyl-[protein] + (6S)-5,6,7,8-tetrahydrofolate = N(6)-[(R)-dihydrolipoyl]-L-lysyl-[protein] + (6R)-5,10-methylene-5,6,7,8-tetrahydrofolate + NH4(+). Its function is as follows. The glycine cleavage system catalyzes the degradation of glycine. The sequence is that of Aminomethyltransferase from Erwinia tasmaniensis (strain DSM 17950 / CFBP 7177 / CIP 109463 / NCPPB 4357 / Et1/99).